The sequence spans 273 residues: Putative phosphoenolpyruvate synthase regulatory protein (273 aa).

153 to 160 (AVSRAGKT) contributes to the ADP binding site.

It belongs to the pyruvate, phosphate/water dikinase regulatory protein family. PSRP subfamily.

The enzyme catalyses [pyruvate, water dikinase] + ADP = [pyruvate, water dikinase]-phosphate + AMP + H(+). It catalyses the reaction [pyruvate, water dikinase]-phosphate + phosphate + H(+) = [pyruvate, water dikinase] + diphosphate. Bifunctional serine/threonine kinase and phosphorylase involved in the regulation of the phosphoenolpyruvate synthase (PEPS) by catalyzing its phosphorylation/dephosphorylation. This Xylella fastidiosa (strain M12) protein is Putative phosphoenolpyruvate synthase regulatory protein.